The following is a 133-amino-acid chain: ATP synthase epsilon chain, sodium ion specific (133 aa).

It belongs to the ATPase epsilon chain family. F-type ATPases have 2 components, CF(1) - the catalytic core - and CF(0) - the membrane proton channel. CF(1) has five subunits: alpha(3), beta(3), gamma(1), delta(1), epsilon(1). CF(0) has three main subunits: a, b and c.

It localises to the cell membrane. Its activity is regulated as follows. Inhibited by nitrate. In terms of biological role, produces ATP from ADP in the presence of a sodium gradient across the membrane. The sequence is that of ATP synthase epsilon chain, sodium ion specific (atpC) from Acetobacterium woodii (strain ATCC 29683 / DSM 1030 / JCM 2381 / KCTC 1655 / WB1).